The primary structure comprises 60 residues: Large ribosomal subunit protein bL32 (60 aa).

The tract at residues M1–D60 is disordered. Residues K7–R16 are compositionally biased toward basic residues.

It belongs to the bacterial ribosomal protein bL32 family.

This chain is Large ribosomal subunit protein bL32, found in Francisella philomiragia subsp. philomiragia (strain ATCC 25017 / CCUG 19701 / FSC 153 / O#319-036).